A 360-amino-acid chain; its full sequence is Amine dehydrogenase (360 aa).

This sequence belongs to the amine dehydrogenase family. As to quaternary structure, homodimer.

The catalysed reaction is a secondary alkyl amine + NAD(+) + H2O = a ketone + NH4(+) + NADH + H(+). It carries out the reaction a secondary alkyl amine + NADP(+) + H2O = a ketone + NH4(+) + NADPH + H(+). It catalyses the reaction serinol + NAD(+) + H2O = dihydroxyacetone + NH4(+) + NADH + H(+). The enzyme catalyses serinol + NADP(+) + H2O = dihydroxyacetone + NH4(+) + NADPH + H(+). The catalysed reaction is 2-aminopropan-1-ol + NAD(+) + H2O = hydroxyacetone + NH4(+) + NADH + H(+). It carries out the reaction (R)-1-phenylethylamine + NAD(+) + H2O = acetophenone + NH4(+) + NADH + H(+). It catalyses the reaction (S)-1-phenylethylamine + NAD(+) + H2O = acetophenone + NH4(+) + NADH + H(+). The enzyme catalyses (2S)-2-aminobutan-1-ol + NAD(+) + H2O = 1-hydroxy-2-butanone + NH4(+) + NADH + H(+). The catalysed reaction is (2S)-2-amino-3-methylbutan-1-ol + NAD(+) + H2O = 1-hydroxy-3-methylbutan-2-one + NH4(+) + NADH + H(+). It carries out the reaction 2-aminopentan-1-ol + NAD(+) + H2O = 1-hydroxypentan-2-one + NH4(+) + NADH + H(+). It catalyses the reaction (S)-leucinol + NAD(+) + H2O = 1-hydroxy-4-methylpentan-2-one + NH4(+) + NADH + H(+). The enzyme catalyses (S)-isoleucinol + NAD(+) + H2O = (3S)-1-hydroxy-3-methylpentan-2-one + NH4(+) + NADH + H(+). The catalysed reaction is (S)-methioninol + NAD(+) + H2O = 1-hydroxy-4-(methythio)butan-2-one + NH4(+) + NADH + H(+). It carries out the reaction 2-aminocyclohexanol + NAD(+) + H2O = 2-hydroxycyclohexan-1-one + NH4(+) + NADH + H(+). It catalyses the reaction L-alanine + NAD(+) + H2O = pyruvate + NH4(+) + NADH + H(+). The enzyme catalyses D-alanine + NAD(+) + H2O = pyruvate + NH4(+) + NADH + H(+). The catalysed reaction is L-aspartate + NAD(+) + H2O = oxaloacetate + NH4(+) + NADH + H(+). It carries out the reaction D-aspartate + NAD(+) + H2O = oxaloacetate + NH4(+) + NADH + H(+). It catalyses the reaction L-glutamate + NAD(+) + H2O = 2-oxoglutarate + NH4(+) + NADH + H(+). The enzyme catalyses D-glutamate + NAD(+) + H2O = 2-oxoglutarate + NH4(+) + NADH + H(+). The catalysed reaction is L-serine + NAD(+) + H2O = 3-hydroxypyruvate + NH4(+) + NADH + H(+). It carries out the reaction D-serine + NAD(+) + H2O = 3-hydroxypyruvate + NH4(+) + NADH + H(+). It catalyses the reaction methylamine + NAD(+) + H2O = formaldehyde + NH4(+) + NADH + H(+). The enzyme catalyses ethylamine + NAD(+) + H2O = acetaldehyde + NH4(+) + NADH + H(+). The catalysed reaction is propylamine + NAD(+) + H2O = propanal + NH4(+) + NADH + H(+). It carries out the reaction butylamine + NAD(+) + H2O = butanal + NH4(+) + NADH + H(+). It catalyses the reaction hexylamine + NAD(+) + H2O = hexanal + NH4(+) + NADH + H(+). The enzyme catalyses octylamine + NAD(+) + H2O = octanal + NH4(+) + NADH + H(+). The catalysed reaction is (R)-sec-butylamine + NAD(+) + H2O = butan-2-one + NH4(+) + NADH + H(+). It carries out the reaction (S)-sec-butylamine + NAD(+) + H2O = butan-2-one + NH4(+) + NADH + H(+). It catalyses the reaction 2-aminopentane + NAD(+) + H2O = pentan-2-one + NH4(+) + NADH + H(+). The enzyme catalyses 3-aminopentane + NAD(+) + H2O = pentan-3-one + NH4(+) + NADH + H(+). The catalysed reaction is (2R)-heptan-2-amine + NAD(+) + H2O = heptan-2-one + NH4(+) + NADH + H(+). It carries out the reaction (2S)-heptan-2-amine + NAD(+) + H2O = heptan-2-one + NH4(+) + NADH + H(+). It catalyses the reaction benzylamine + NAD(+) + H2O = benzaldehyde + NH4(+) + NADH + H(+). The enzyme catalyses 3-aminobutan-2-ol + NAD(+) + H2O = acetoin + NH4(+) + NADH + H(+). The catalysed reaction is 3-aminobutan-1-ol + NAD(+) + H2O = 4-hydroxybutan-2-one + NH4(+) + NADH + H(+). It carries out the reaction 5-hydroxypentan-2-amine + NAD(+) + H2O = 5-hydroxypentan-2-one + NH4(+) + NADH + H(+). It catalyses the reaction 4-hydroxyhexan-3-amine + NAD(+) + H2O = 4-hydroxyhexan-3-one + NH4(+) + NADH + H(+). The enzyme catalyses 5-hydroxyoctan-4-amine + NAD(+) + H2O = 5-hydroxyoctan-4-one + NH4(+) + NADH + H(+). The catalysed reaction is 2-hydroxy-1-phenylethan-1-amine + NAD(+) + H2O = 2-hydroxyacetophenone + NH4(+) + NADH + H(+). It carries out the reaction hexan-2-amine + NAD(+) + H2O = hexan-2-one + NH4(+) + NADH + H(+). It catalyses the reaction 4-phenylbutan-2-amine + NAD(+) + H2O = 4-phenylbutan-2-one + NH4(+) + NADH + H(+). Functionally, catalyzes the reversible oxidative deaminations of a broad range of amines, amino alcohols and amino acids. Catalyzes the reversible dehydrogenation of serinol in the presence of NAD(+) to give dihydroxyacetone, ammonium ion and NADH, while NADP(+) shows a slight activity. Is also able to produce 2-amino-1-propanol and aspartate by the reductive amination of the corresponding keto alcohol (hydroxyacetone) and keto acid (oxaloacetate) in the presence of ammonium ions and NADH, and that of acetophenone from phenylethylamine by the oxidative deamination in the presence of NAD(+). This chain is Amine dehydrogenase, found in Streptomyces virginiae (Streptomyces cinnamonensis).